A 171-amino-acid polypeptide reads, in one-letter code: Protein-export protein SecB (171 aa).

This sequence belongs to the SecB family. As to quaternary structure, homotetramer, a dimer of dimers. One homotetramer interacts with 1 SecA dimer.

The protein resides in the cytoplasm. One of the proteins required for the normal export of preproteins out of the cell cytoplasm. It is a molecular chaperone that binds to a subset of precursor proteins, maintaining them in a translocation-competent state. It also specifically binds to its receptor SecA. In Histophilus somni (strain 129Pt) (Haemophilus somnus), this protein is Protein-export protein SecB.